Consider the following 135-residue polypeptide: MPTIQQLIREERKAAVRKTKAPALKGCPQRRGVCTRVYTTTPKKPNSALRKVARVRLTSGFEVTAYIPGIGHNLQEHSVVMIRGGRVKDLPGVRYHIIRGTLDAAGVKDRKQGRSKYGAKRPKPGQAPAAAGKKK.

Asp89 carries the 3-methylthioaspartic acid modification. The disordered stretch occupies residues 106–135 (GVKDRKQGRSKYGAKRPKPGQAPAAAGKKK). Residues 113 to 123 (GRSKYGAKRPK) are compositionally biased toward basic residues. Over residues 124 to 135 (PGQAPAAAGKKK) the composition is skewed to low complexity.

It belongs to the universal ribosomal protein uS12 family. In terms of assembly, part of the 30S ribosomal subunit. Contacts proteins S8 and S17. May interact with IF1 in the 30S initiation complex.

In terms of biological role, with S4 and S5 plays an important role in translational accuracy. Functionally, interacts with and stabilizes bases of the 16S rRNA that are involved in tRNA selection in the A site and with the mRNA backbone. Located at the interface of the 30S and 50S subunits, it traverses the body of the 30S subunit contacting proteins on the other side and probably holding the rRNA structure together. The combined cluster of proteins S8, S12 and S17 appears to hold together the shoulder and platform of the 30S subunit. This Synechococcus sp. (strain JA-3-3Ab) (Cyanobacteria bacterium Yellowstone A-Prime) protein is Small ribosomal subunit protein uS12.